The chain runs to 163 residues: Putative pre-16S rRNA nuclease (163 aa).

This sequence belongs to the YqgF nuclease family.

The protein resides in the cytoplasm. In terms of biological role, could be a nuclease involved in processing of the 5'-end of pre-16S rRNA. The polypeptide is Putative pre-16S rRNA nuclease (Rhodopseudomonas palustris (strain BisB18)).